The primary structure comprises 180 residues: MALLLEYLPIIAFFVFYKLADIYVATGVLMVGTVLQILALKLLKQPITTRHWVILAVVMLFGAVTLLLRDDWFIKMKVSVVYVAIALMLLGGLIWKKRSPIQAMMGKDIKLPDTAWSRLTYAWIIFCLALAAVNLYIAEFWSQEAWVNFKVFGILGISLVFTIGTGFYMYHHAIDEETQD.

The next 5 membrane-spanning stretches (helical) occupy residues 10-30 (IIAF…GVLM), 47-67 (ITTR…VTLL), 74-94 (IKMK…GGLI), 121-141 (YAWI…AEFW), and 151-171 (VFGI…YMYH).

It belongs to the YciB family.

Its subcellular location is the cell inner membrane. In terms of biological role, plays a role in cell envelope biogenesis, maintenance of cell envelope integrity and membrane homeostasis. This Idiomarina loihiensis (strain ATCC BAA-735 / DSM 15497 / L2-TR) protein is Inner membrane-spanning protein YciB.